The primary structure comprises 220 residues: Putative NAD(P)H nitroreductase (220 aa).

155–160 (GASALG) contributes to the NAD(+) binding site.

This sequence belongs to the nitroreductase family. It depends on FMN as a cofactor.

This chain is Putative NAD(P)H nitroreductase, found in Haemophilus influenzae (strain ATCC 51907 / DSM 11121 / KW20 / Rd).